A 163-amino-acid chain; its full sequence is Large ribosomal subunit protein uL10 (163 aa).

It belongs to the universal ribosomal protein uL10 family. As to quaternary structure, part of the ribosomal stalk of the 50S ribosomal subunit. The N-terminus interacts with L11 and the large rRNA to form the base of the stalk. The C-terminus forms an elongated spine to which L12 dimers bind in a sequential fashion forming a multimeric L10(L12)X complex.

Functionally, forms part of the ribosomal stalk, playing a central role in the interaction of the ribosome with GTP-bound translation factors. This is Large ribosomal subunit protein uL10 from Actinobacillus pleuropneumoniae serotype 5b (strain L20).